The sequence spans 317 residues: MYDWLNALPKAELHLHLEGSLEPELLFALAERNKIALPWSDVETLRKAYAFNNLQEFLDLYYQGADVLRTSQDFYDLTWAYLLRCKEQNVIHTEPFFDPQTHTDRGIPFEVVLNGIAAALKDGEQQLGITSGLILSFLRHLSEDEAQKTLDQALPFRDAFVAVGLDSSEMGHPPSKFQRVFDRARHEGFLTVAHAGEEGPPEYIWEAIDLLKIQRIDHGVRAIEDERLMQRIIDEQIPLTVCPLSNTKLCVFDHMSQHNILDMLERGVKVTVNSDDPAYFGGYVTENFHALHEHLGMTQDQAKRLAQNSLDARLVKP.

Positions 14, 16, and 194 each coordinate Zn(2+). The Proton donor role is filled by Glu-197. Asp-275 is a binding site for Zn(2+). Position 276 (Asp-276) interacts with substrate.

Belongs to the metallo-dependent hydrolases superfamily. Adenosine and AMP deaminases family. Adenine deaminase type 2 subfamily. Zn(2+) is required as a cofactor.

It carries out the reaction adenine + H2O + H(+) = hypoxanthine + NH4(+). Its function is as follows. Catalyzes the hydrolytic deamination of adenine to hypoxanthine. Plays an important role in the purine salvage pathway and in nitrogen catabolism. The protein is Adenine deaminase of Pseudomonas fluorescens (strain Pf0-1).